We begin with the raw amino-acid sequence, 268 residues long: Undecaprenyl-diphosphatase (268 aa).

Transmembrane regions (helical) follow at residues 39 to 59 (SETF…LIYK), 75 to 95 (LPYF…GLWV), 106 to 126 (LGPV…TEKV), 179 to 199 (TEFA…FAWI), 214 to 234 (LTLA…VKWL), and 243 to 263 (FIPF…LVAL).

Belongs to the UppP family.

The protein localises to the cell inner membrane. It catalyses the reaction di-trans,octa-cis-undecaprenyl diphosphate + H2O = di-trans,octa-cis-undecaprenyl phosphate + phosphate + H(+). Its function is as follows. Catalyzes the dephosphorylation of undecaprenyl diphosphate (UPP). Confers resistance to bacitracin. The protein is Undecaprenyl-diphosphatase of Methylacidiphilum infernorum (isolate V4) (Methylokorus infernorum (strain V4)).